Here is a 907-residue protein sequence, read N- to C-terminus: Collagen alpha-2(I) chain (907 aa).

Disordered stretches follow at residues 1 to 183 (GPMG…GIPG) and 199 to 907 (IPGP…PGPS). Residues 19-33 (AGEDGHPGKPGRERG) are compositionally biased toward basic and acidic residues. Low complexity-rich tracts occupy residues 101–130 (VGAPGPAGARGSDGSVGPVGPAGPIGSAGP), 155–169 (AGPRGEVGIPGVSGP), and 206–221 (PGPVGAAGATGARGIV). N260 carries the deamidated asparagine modification. P272 carries the post-translational modification 4-hydroxyproline. Low complexity-rich tracts occupy residues 272 to 281 (PGIRGSRGIP), 292 to 307 (PPGSRGASGPAGVRGP), 340 to 362 (PAGIPGIDGRPGPAGPAGARGEP), 424 to 441 (PGESGAAGPAGPIGSRGP), 453 to 475 (EPGVVGAPGTAGPSGPSGIPGER), 495 to 507 (APGAVGAPGPAGA), 535 to 555 (VGPAGPNGFAGPAGAAGQPGA), and 566 to 581 (NGPVGPTGPVGSAGPA). Residues 591–600 (GSRGDGGPPG) show a composition bias toward gly residues. 5 stretches are compositionally biased toward low complexity: residues 601–611 (ATGFPGAAGRT), 664–691 (EAGTAGAPGIPGPQGIIGAPGIIGIPGS), 706–745 (EPGPIGIAGPPGARGPPGAVGSPGVNGAPGEAGRDGNPGN), 756–766 (NSGPVGAAGAP), and 783–804 (EPGPVGSVGPAGAVGPRGPSGP). A compositionally biased stretch (basic and acidic residues) spans 808 to 819 (RGDKGEPGDKGP). Over residues 892-907 (AGPPGPPGPPGPPGPS) the composition is skewed to pro residues.

It belongs to the fibrillar collagen family. In terms of assembly, trimers of one alpha 2(I) and two alpha 1(I) chains. Interacts (via C-terminus) with TMEM131 (via PapD-L domain); the interaction is direct and is involved in assembly and TRAPPIII ER-to-Golgi transport complex-dependent secretion of collagen. Prolines at the third position of the tripeptide repeating unit (G-X-Y) are hydroxylated in some or all of the chains. In terms of tissue distribution, forms the fibrils of tendon, ligaments and bones. In bones, the fibrils are mineralized with calcium hydroxyapatite.

The protein resides in the secreted. Its subcellular location is the extracellular space. It localises to the extracellular matrix. Functionally, type I collagen is a member of group I collagen (fibrillar forming collagen). In Macrauchenia sp, this protein is Collagen alpha-2(I) chain.